The primary structure comprises 718 residues: Potassium channel KAT1 (718 aa).

The Cytoplasmic portion of the chain corresponds to 1–60; it reads MTQAHSKSCFHQFWDGLQIKRSSDSFTVELLPSLGATINHSNKLQKFIISPYDPRYRSWE. The chain crosses the membrane as a helical span at residues 61 to 81; that stretch reads LFLIVLVVYSAWICPFELAFL. Topologically, residues 82 to 88 are extracellular; that stretch reads RDLPSKL. A helical transmembrane segment spans residues 89-109; it reads LLVENIVDIFFAIDIVLTFFV. Residues 110–132 are Cytoplasmic-facing; the sequence is AYVDSKTHLLVDDRKRIAMRYLS. Residues 133–153 traverse the membrane as a helical segment; it reads TWFIFDVCSTAPFQPIILLFT. Topologically, residues 154-162 are extracellular; the sequence is HKGNDIAFK. Residues 163 to 183 traverse the membrane as a helical; Voltage-sensor segment; that stretch reads VLNLLRLWRLHRVSSLFARLE. Over 184 to 197 the chain is Cytoplasmic; that stretch reads KDIRFNYFWTRCSK. A helical transmembrane segment spans residues 198–218; it reads LISVTLFAVHCAGCFNYMIAD. Over 219-245 the chain is Extracellular; that stretch reads RYPNPEKTWIGAVMSTFRSESLWTRYI. Residues 246 to 265 constitute an intramembrane region (pore-forming); the sequence is TALYWSITTLTTTGYGDLHA. The Extracellular portion of the chain corresponds to 266-269; it reads ENPT. A helical transmembrane segment spans residues 270-290; that stretch reads EMLFDIVYMMFNLGLTAYLIG. Residues 291–718 are Cytoplasmic-facing; that stretch reads NMTNLVVHGT…DGDHLFLLEM (428 aa). 374-493 is a binding site for a nucleoside 3',5'-cyclic phosphate; it reads LFNGVSGNFI…NILMNNLVQK (120 aa). The interval 560–584 is disordered; it reads EATRSSASENENSSMTDKEENHDEV. The segment covering 562–574 has biased composition (polar residues); that stretch reads TRSSASENENSSM. The span at 575–584 shows a compositional bias: basic and acidic residues; sequence TDKEENHDEV. The 72-residue stretch at 647–718 folds into the KHA domain; that stretch reads RVTIHKYRHN…DGDHLFLLEM (72 aa).

It belongs to the potassium channel family. Plant (TC 1.A.1.4) subfamily.

Its subcellular location is the membrane. Probable inward-rectifying potassium channel. Assuming opened or closed conformations in response to the voltage difference across the membrane, the channel is activated by hyperpolarization. The polypeptide is Potassium channel KAT1 (Oryza sativa subsp. japonica (Rice)).